The sequence spans 473 residues: Photosystem II CP43 reaction center protein (473 aa).

Residues 1 to 14 (MKNLYSLRRFYHVE) constitute a propeptide that is removed on maturation. Position 15 is an N-acetylthreonine (Thr-15). Thr-15 carries the post-translational modification Phosphothreonine. 5 helical membrane-spanning segments follow: residues 69 to 93 (LFEV…PHLA), 134 to 155 (LVGP…KDKN), 178 to 200 (KAMY…RIIS), 255 to 275 (KPWA…LSYS), and 291 to 312 (WFNT…ASQS). Glu-367 contacts [CaMn4O5] cluster. A helical membrane pass occupies residues 447-471 (RARAAAAGFEKGIDRDNEPVLSMRP).

This sequence belongs to the PsbB/PsbC family. PsbC subfamily. PSII is composed of 1 copy each of membrane proteins PsbA, PsbB, PsbC, PsbD, PsbE, PsbF, PsbH, PsbI, PsbJ, PsbK, PsbL, PsbM, PsbT, PsbX, PsbY, PsbZ, Psb30/Ycf12, at least 3 peripheral proteins of the oxygen-evolving complex and a large number of cofactors. It forms dimeric complexes. Requires Binds multiple chlorophylls and provides some of the ligands for the Ca-4Mn-5O cluster of the oxygen-evolving complex. It may also provide a ligand for a Cl- that is required for oxygen evolution. PSII binds additional chlorophylls, carotenoids and specific lipids. as cofactor.

The protein resides in the plastid. Its subcellular location is the chloroplast thylakoid membrane. Its function is as follows. One of the components of the core complex of photosystem II (PSII). It binds chlorophyll and helps catalyze the primary light-induced photochemical processes of PSII. PSII is a light-driven water:plastoquinone oxidoreductase, using light energy to abstract electrons from H(2)O, generating O(2) and a proton gradient subsequently used for ATP formation. This is Photosystem II CP43 reaction center protein from Chlorella vulgaris (Green alga).